An 84-amino-acid chain; its full sequence is Small ribosomal subunit protein uS17 (84 aa).

The protein belongs to the universal ribosomal protein uS17 family. As to quaternary structure, part of the 30S ribosomal subunit.

Its function is as follows. One of the primary rRNA binding proteins, it binds specifically to the 5'-end of 16S ribosomal RNA. In Legionella pneumophila (strain Paris), this protein is Small ribosomal subunit protein uS17.